Reading from the N-terminus, the 131-residue chain is Small ribosomal subunit protein eS8 (131 aa).

The interval 11–36 (DLKKPSGGKKGRVRKTKKKALCGGPP) is disordered. A compositionally biased stretch (basic residues) spans 16 to 30 (SGGKKGRVRKTKKKA).

The protein belongs to the eukaryotic ribosomal protein eS8 family. As to quaternary structure, part of the 30S ribosomal subunit.

This is Small ribosomal subunit protein eS8 from Pyrobaculum islandicum (strain DSM 4184 / JCM 9189 / GEO3).